A 179-amino-acid polypeptide reads, in one-letter code: Zinc finger HIT domain-containing protein 3 (179 aa).

Residues C11, C14, C22, C25, C30, C34, H38, and C49 each coordinate Zn(2+). The segment at 11–49 (CVVCLEKPKYRCPACRVPYCSLPCFRKHKAPPLQQLPVC) adopts an HIT-type zinc-finger fold. At S104 the chain carries Phosphoserine.

In terms of assembly, thyroid receptor interacting proteins (TRIPs) specifically interact with the ligand binding domain of the thyroid receptor (TR). Requires the presence of thyroid hormone for its interaction. Interacts with NUFIP1. Interacts (via HIT-type zinc finger) with the RUVBL1/RUVBL2 complex in the presence of ADP.

Its subcellular location is the cytoplasm. It localises to the nucleus. The sequence is that of Zinc finger HIT domain-containing protein 3 (ZNHIT3) from Bos taurus (Bovine).